A 1354-amino-acid polypeptide reads, in one-letter code: Phosphoribosylformylglycinamidine synthase (1354 aa).

ATP contacts are provided by residues 327–338, 407–409, and alanine 714; these read GATTGTGGRLRD and SGF. Mg(2+) is bound by residues aspartate 715, glutamate 754, asparagine 758, and aspartate 918. Serine 920 provides a ligand contact to ATP. The Glutamine amidotransferase type-1 domain occupies 1087-1337; that stretch reads VAVLREEGVN…EVSPTQSESP (251 aa). Cysteine 1180 acts as the Nucleophile in catalysis. Residues histidine 1310 and glutamate 1312 contribute to the active site.

This sequence in the N-terminal section; belongs to the FGAMS family.

The enzyme catalyses N(2)-formyl-N(1)-(5-phospho-beta-D-ribosyl)glycinamide + L-glutamine + ATP + H2O = 2-formamido-N(1)-(5-O-phospho-beta-D-ribosyl)acetamidine + L-glutamate + ADP + phosphate + H(+). It functions in the pathway purine metabolism; IMP biosynthesis via de novo pathway; 5-amino-1-(5-phospho-D-ribosyl)imidazole from N(2)-formyl-N(1)-(5-phospho-D-ribosyl)glycinamide: step 1/2. In terms of biological role, phosphoribosylformylglycinamidine synthase involved in the purines biosynthetic pathway. Catalyzes the ATP-dependent conversion of formylglycinamide ribonucleotide (FGAR) and glutamine to yield formylglycinamidine ribonucleotide (FGAM) and glutamate. Because of its role in metabolisms, is involved in sleep regulation. The polypeptide is Phosphoribosylformylglycinamidine synthase (Drosophila melanogaster (Fruit fly)).